The chain runs to 367 residues: Glutamate 5-kinase (367 aa).

K10 contacts ATP. Positions 50, 137, and 149 each coordinate substrate. Residues 169 to 170 (TD) and 211 to 217 (TGGMGTK) contribute to the ATP site. The region spanning 275–353 (AGEITVDDGA…QEISEILGYE (79 aa)) is the PUA domain.

Belongs to the glutamate 5-kinase family.

It is found in the cytoplasm. It catalyses the reaction L-glutamate + ATP = L-glutamyl 5-phosphate + ADP. The protein operates within amino-acid biosynthesis; L-proline biosynthesis; L-glutamate 5-semialdehyde from L-glutamate: step 1/2. Functionally, catalyzes the transfer of a phosphate group to glutamate to form L-glutamate 5-phosphate. This chain is Glutamate 5-kinase, found in Serratia proteamaculans (strain 568).